A 460-amino-acid chain; its full sequence is Bifunctional protein GlmU (460 aa).

Positions 1–233 (MLDIVIMAAG…ETEVLGVNSP (233 aa)) are pyrophosphorylase. Residues K21, Q76, and 81 to 82 (GT) each bind UDP-N-acetyl-alpha-D-glucosamine. D105 serves as a coordination point for Mg(2+). Positions 140, 158, and 231 each coordinate UDP-N-acetyl-alpha-D-glucosamine. N231 contributes to the Mg(2+) binding site. The interval 234 to 254 (LQLADLERRLQRKQAEALLEA) is linker. The segment at 255 to 460 (GVRLADPARF…AGWQRPQKKR (206 aa)) is N-acetyltransferase. 2 residues coordinate UDP-N-acetyl-alpha-D-glucosamine: R337 and K355. The active-site Proton acceptor is H367. Y370 and N381 together coordinate UDP-N-acetyl-alpha-D-glucosamine. Residues A384, 390–391 (NY), S409, G427, and R444 each bind acetyl-CoA.

In the N-terminal section; belongs to the N-acetylglucosamine-1-phosphate uridyltransferase family. This sequence in the C-terminal section; belongs to the transferase hexapeptide repeat family. In terms of assembly, homotrimer. Mg(2+) serves as cofactor.

The protein localises to the cytoplasm. The enzyme catalyses alpha-D-glucosamine 1-phosphate + acetyl-CoA = N-acetyl-alpha-D-glucosamine 1-phosphate + CoA + H(+). It carries out the reaction N-acetyl-alpha-D-glucosamine 1-phosphate + UTP + H(+) = UDP-N-acetyl-alpha-D-glucosamine + diphosphate. It functions in the pathway nucleotide-sugar biosynthesis; UDP-N-acetyl-alpha-D-glucosamine biosynthesis; N-acetyl-alpha-D-glucosamine 1-phosphate from alpha-D-glucosamine 6-phosphate (route II): step 2/2. The protein operates within nucleotide-sugar biosynthesis; UDP-N-acetyl-alpha-D-glucosamine biosynthesis; UDP-N-acetyl-alpha-D-glucosamine from N-acetyl-alpha-D-glucosamine 1-phosphate: step 1/1. Its pathway is bacterial outer membrane biogenesis; LPS lipid A biosynthesis. Catalyzes the last two sequential reactions in the de novo biosynthetic pathway for UDP-N-acetylglucosamine (UDP-GlcNAc). The C-terminal domain catalyzes the transfer of acetyl group from acetyl coenzyme A to glucosamine-1-phosphate (GlcN-1-P) to produce N-acetylglucosamine-1-phosphate (GlcNAc-1-P), which is converted into UDP-GlcNAc by the transfer of uridine 5-monophosphate (from uridine 5-triphosphate), a reaction catalyzed by the N-terminal domain. The polypeptide is Bifunctional protein GlmU (Methylibium petroleiphilum (strain ATCC BAA-1232 / LMG 22953 / PM1)).